The chain runs to 383 residues: Putative F-box protein At4g09190 (383 aa).

The F-box domain maps to 16-67 (RSQREHIPLDLIVEIVSSLPAKSIVRFRSVSKLWSSIITTPDFTSSVVTRSL).

The protein is Putative F-box protein At4g09190 of Arabidopsis thaliana (Mouse-ear cress).